Consider the following 435-residue polypeptide: Tol-Pal system protein TolB (435 aa).

The first 20 residues, 1–20 (MRKIIAGVFIFVFLISNLYA), serve as a signal peptide directing secretion.

Belongs to the TolB family. The Tol-Pal system is composed of five core proteins: the inner membrane proteins TolA, TolQ and TolR, the periplasmic protein TolB and the outer membrane protein Pal. They form a network linking the inner and outer membranes and the peptidoglycan layer.

The protein resides in the periplasm. Functionally, part of the Tol-Pal system, which plays a role in outer membrane invagination during cell division and is important for maintaining outer membrane integrity. The protein is Tol-Pal system protein TolB of Francisella tularensis subsp. tularensis (strain WY96-3418).